A 350-amino-acid polypeptide reads, in one-letter code: m7GpppX diphosphatase (350 aa).

Residue Ser2 is modified to N-acetylserine. The residue at position 60 (Ser60) is a Phosphoserine. Thr66 carries the post-translational modification Phosphothreonine. A Phosphothreonine; by YAK1 modification is found at Thr66. Phosphotyrosine is present on Tyr70. Residue Thr120 is modified to Phosphothreonine. Substrate is bound by residues Glu171, Lys196, and 259–270 (HYQPSYYHFHIH). The Histidine triad motif motif lies at 266 to 270 (HFHIH). His268 serves as the catalytic Nucleophile.

It belongs to the HIT family. In terms of assembly, homodimer. Forms heterodimer with DCS2; the interaction inhibits the DCS1 scavenger decapping activity during post-diauxic growth. Post-translationally, phosphorylated. Phosphorylation occurs upon glucose deprivation.

The protein resides in the cytoplasm. Its subcellular location is the perinuclear region. It is found in the P-body. The catalysed reaction is a 5'-end (N(7)-methyl 5'-triphosphoguanosine)-ribonucleoside in mRNA + H2O = N(7)-methyl-GMP + a 5'-end diphospho-ribonucleoside in mRNA + 2 H(+). Its activity is regulated as follows. The hydrolytic product 7-methylguanosine diphosphate (m7GDP) efficiently inhibits the decapping scavenger activity and acts as a competitive inhibitor in vitro. Functionally, decapping scavenger enzyme that catalyzes the cleavage of a residual cap structure following the degradation of mRNAs by the 3'-&gt;5' exosome-mediated mRNA decay pathway. Hydrolyzes cap analog structures like 7-methylguanosine nucleoside triphosphate (m7GpppG) and tri-methyl guanosine nucleoside triphosphate (m3(2,2,7)GpppG) with up to 10 nucleotide substrates (small capped oligoribonucleotides) and specifically releases 5'-phosphorylated RNA fragments and 7-methylguanosine monophosphate (m7GMP) or tri-methyl guanosine nucleoside monophosphate (m3(2,2,7)GMP), respectively. Does not hydrolyze unmethylated cap analog (GpppG) and shows no decapping activity on intact m7GpppG-capped mRNA molecules longer than 25 nucleotides. Does not hydrolyze 7-methylguanosine diphosphate (m7GDP) and tri-methylguanosine diphosphate (m3(2,2,7)GDP) to (m(7)GMP) and m3(2,2,7)GMP, respectively. May also play a role in the 5'-&gt;3 mRNA decay pathway; m7GDP, the downstream product released by the 5'-&gt;3' mRNA mediated decapping activity, may be also converted by DCS1 to m7GMP. Binds to m7GpppG and strongly to m7GDP. May also regulate the 5'-&gt;3' exoribonucleolytic mRNA decay pathway in a cap-independent manner. Negatively regulates trehalase activity. The chain is m7GpppX diphosphatase from Saccharomyces cerevisiae (strain ATCC 204508 / S288c) (Baker's yeast).